A 292-amino-acid polypeptide reads, in one-letter code: Glutamyl-Q tRNA(Asp) synthetase (292 aa).

Residues 11 to 15 (RFAPS) and Glu-47 contribute to the L-glutamate site. Positions 14-24 (PSPTGPLHFGS) match the 'HIGH' region motif. Residues Cys-103, Cys-105, Tyr-116, and Cys-120 each contribute to the Zn(2+) site. L-glutamate is bound by residues Tyr-173 and Arg-191. A 'KMSKS' region motif is present at residues 229-233 (KLSKQ). Lys-232 is a binding site for ATP.

The protein belongs to the class-I aminoacyl-tRNA synthetase family. GluQ subfamily. Zn(2+) is required as a cofactor.

Functionally, catalyzes the tRNA-independent activation of glutamate in presence of ATP and the subsequent transfer of glutamate onto a tRNA(Asp). Glutamate is transferred on the 2-amino-5-(4,5-dihydroxy-2-cyclopenten-1-yl) moiety of the queuosine in the wobble position of the QUC anticodon. The polypeptide is Glutamyl-Q tRNA(Asp) synthetase (Acinetobacter baylyi (strain ATCC 33305 / BD413 / ADP1)).